Reading from the N-terminus, the 122-residue chain is MIQVQTRLRVGDNSGAKELMCIKVLGGSMRRYASIGDIIVASVKEATPGGVVKKGDVVKAVVVRTKKEIKRKDGTYIRFSENAAVVIKDDRSPRGTRIFGPVARELRDRDFMKIISLAPEVI.

It belongs to the universal ribosomal protein uL14 family. Part of the 50S ribosomal subunit. Forms a cluster with proteins L3 and L19. In the 70S ribosome, L14 and L19 interact and together make contacts with the 16S rRNA in bridges B5 and B8.

Its function is as follows. Binds to 23S rRNA. Forms part of two intersubunit bridges in the 70S ribosome. This Desulfitobacterium hafniense (strain DSM 10664 / DCB-2) protein is Large ribosomal subunit protein uL14.